Here is a 440-residue protein sequence, read N- to C-terminus: Light-independent protochlorophyllide reductase subunit N (440 aa).

Residues 1-24 form a disordered region; the sequence is MTCRPALSDSHPPEPGTPSSPSFG. [4Fe-4S] cluster is bound by residues Cys-42, Cys-67, and Cys-128.

The protein belongs to the BchN/ChlN family. Protochlorophyllide reductase is composed of three subunits; BchL, BchN and BchB. Forms a heterotetramer of two BchB and two BchN subunits. Requires [4Fe-4S] cluster as cofactor.

It carries out the reaction chlorophyllide a + oxidized 2[4Fe-4S]-[ferredoxin] + 2 ADP + 2 phosphate = protochlorophyllide a + reduced 2[4Fe-4S]-[ferredoxin] + 2 ATP + 2 H2O. Its pathway is porphyrin-containing compound metabolism; bacteriochlorophyll biosynthesis (light-independent). In terms of biological role, component of the dark-operative protochlorophyllide reductase (DPOR) that uses Mg-ATP and reduced ferredoxin to reduce ring D of protochlorophyllide (Pchlide) to form chlorophyllide a (Chlide). This reaction is light-independent. The NB-protein (BchN-BchB) is the catalytic component of the complex. The sequence is that of Light-independent protochlorophyllide reductase subunit N from Rhodospirillum rubrum (strain ATCC 11170 / ATH 1.1.1 / DSM 467 / LMG 4362 / NCIMB 8255 / S1).